The primary structure comprises 525 residues: Probable CoA ligase CCL9 (525 aa).

ATP-binding positions include 171–179 (TSGTTSRPK), 311–316 (EAYAMT), Asp395, 407–410 (LVGR), and Lys501. An SBD1 region spans residues 242-311 (SASTFWSDMI…EESFGAPVLE (70 aa)). The segment at 312–375 (AYAMTEAAHL…IRGPNVTKGY (64 aa)) is SBD2.

The protein belongs to the ATP-dependent AMP-binding enzyme family.

It is found in the cytoplasm. Its subcellular location is the cytosol. The protein is Probable CoA ligase CCL9 of Humulus lupulus (European hop).